Here is a 1297-residue protein sequence, read N- to C-terminus: Insulin receptor-related protein (1297 aa).

The signal sequence occupies residues 1–26; the sequence is MAVPSLWPWGACLPVIFLSLGFGLDT. A glycan (N-linked (GlcNAc...) asparagine) is linked at asparagine 47. 9 disulfide bridges follow: cysteine 214–cysteine 222, cysteine 216–cysteine 228, cysteine 229–cysteine 237, cysteine 233–cysteine 246, cysteine 249–cysteine 258, cysteine 262–cysteine 274, cysteine 280–cysteine 300, cysteine 304–cysteine 317, and cysteine 320–cysteine 324. N-linked (GlcNAc...) asparagine glycosylation occurs at asparagine 311. N-linked (GlcNAc...) asparagine glycans are attached at residues asparagine 411, asparagine 492, asparagine 528, asparagine 616, and asparagine 634. Fibronectin type-III domains are found at residues 483–603 and 607–707; these read QTRT…TLPA and VPQD…AQEA. An intrachain disulfide couples cysteine 657 to cysteine 864. Disordered stretches follow at residues 666–687 and 732–758; these read SNND…ESDC and SINK…GNSS. The segment covering 675 to 685 has biased composition (acidic residues); that stretch reads EDGDPEAEMES. Topologically, residues 747–921 are extracellular; sequence AAGPLRLGGN…PEEEDAGGLH (175 aa). 3 N-linked (GlcNAc...) asparagine glycosylation sites follow: asparagine 756, asparagine 885, and asparagine 898. In terms of domain architecture, Fibronectin type-III 3 spans 818–913; sequence IPGKVAWEAS…SVAFYILGPE (96 aa). A helical transmembrane segment spans residues 922 to 943; sequence VLLTATPVGLTLLIVLAALGFF. Residues 944–1297 are Cytoplasmic-facing; sequence YGKKRNRTLY…CSPQNGGPGH (354 aa). Positions 979-1254 constitute a Protein kinase domain; that stretch reads ISIIRELGQG…SIQEELRPSF (276 aa). Residues 985-993 and lysine 1013 each bind ATP; that span reads LGQGSFGMV. Residue aspartate 1115 is the Proton acceptor of the active site. Residues tyrosine 1145 and tyrosine 1146 each carry the phosphotyrosine; by autocatalysis modification. The disordered stretch occupies residues 1267-1297; that stretch reads GARGSLPTTDAEPDSSPTPRDCSPQNGGPGH. Over residues 1281 to 1297 the composition is skewed to polar residues; the sequence is SSPTPRDCSPQNGGPGH.

This sequence belongs to the protein kinase superfamily. Tyr protein kinase family. Insulin receptor subfamily. Probable tetramer of 2 alpha and 2 beta chains linked by disulfide bonds. The alpha chains contribute to the formation of the ligand-binding domain, while the beta chains carry the kinase domain. Autophosphorylated on tyrosine residues between pH 7.9 and pH 10.5.

The protein localises to the membrane. It carries out the reaction L-tyrosyl-[protein] + ATP = O-phospho-L-tyrosyl-[protein] + ADP + H(+). In terms of biological role, receptor with tyrosine-protein kinase activity. Functions as a pH sensing receptor which is activated by increased extracellular pH. Activates an intracellular signaling pathway that involves IRS1 and AKT1/PKB. The polypeptide is Insulin receptor-related protein (INSRR) (Homo sapiens (Human)).